Consider the following 377-residue polypeptide: Erythronate-4-phosphate dehydrogenase (377 aa).

Residues serine 59 and threonine 81 each contribute to the substrate site. NAD(+) is bound at residue aspartate 162. Arginine 237 is a catalytic residue. Aspartate 260 contributes to the NAD(+) binding site. Glutamate 265 is a catalytic residue. Catalysis depends on histidine 282, which acts as the Proton donor. NAD(+) is bound at residue glycine 285. Tyrosine 286 is a substrate binding site.

It belongs to the D-isomer specific 2-hydroxyacid dehydrogenase family. PdxB subfamily. As to quaternary structure, homodimer.

Its subcellular location is the cytoplasm. The enzyme catalyses 4-phospho-D-erythronate + NAD(+) = (R)-3-hydroxy-2-oxo-4-phosphooxybutanoate + NADH + H(+). The protein operates within cofactor biosynthesis; pyridoxine 5'-phosphate biosynthesis; pyridoxine 5'-phosphate from D-erythrose 4-phosphate: step 2/5. In terms of biological role, catalyzes the oxidation of erythronate-4-phosphate to 3-hydroxy-2-oxo-4-phosphonooxybutanoate. The chain is Erythronate-4-phosphate dehydrogenase from Psychrobacter arcticus (strain DSM 17307 / VKM B-2377 / 273-4).